Here is a 353-residue protein sequence, read N- to C-terminus: Ferrochelatase (353 aa).

Residues 1-13 show a composition bias toward basic and acidic residues; it reads MTLERTGRDEEKA. Positions 1–23 are disordered; the sequence is MTLERTGRDEEKALTQPPSGHSS. The Fe cation site is built by His-223 and Glu-304.

Belongs to the ferrochelatase family.

The protein localises to the cytoplasm. It carries out the reaction heme b + 2 H(+) = protoporphyrin IX + Fe(2+). Its pathway is porphyrin-containing compound metabolism; protoheme biosynthesis; protoheme from protoporphyrin-IX: step 1/1. Catalyzes the ferrous insertion into protoporphyrin IX. This Chelativorans sp. (strain BNC1) protein is Ferrochelatase.